A 147-amino-acid polypeptide reads, in one-letter code: Vasopressin-neurophysin 2-copeptin (147 aa).

A disulfide bond links C1 and C6. A Glycine amide modification is found at G9. 7 cysteine pairs are disulfide-bonded: C22–C66, C25–C39, C33–C56, C40–C46, C73–C85, C79–C97, and C86–C91. Residue N114 is glycosylated (N-linked (GlcNAc...) asparagine).

This sequence belongs to the vasopressin/oxytocin family. Interacts with vasopressin receptors V1bR/AVPR1B (Ki=85 pM), V1aR/AVPR1A (Ki=0.6 nM) and V2R/AVPR2 (Ki=4.9 nM). Interacts with oxytocin receptor (OXTR) (Ki=110 nM).

Its subcellular location is the secreted. Neurophysin 2 specifically binds vasopressin. In terms of biological role, vasopressin has a direct antidiuretic action on the kidney, it also causes vasoconstriction of the peripheral vessels. Acts by binding to vasopressin receptors (V1bR/AVPR1B, V1aR/AVPR1A, and V2R/AVPR2). This chain is Vasopressin-neurophysin 2-copeptin (AVP), found in Ovis aries (Sheep).